The chain runs to 251 residues: Phosphosulfolactate synthase (251 aa).

It belongs to the phosphosulfolactate synthase family. As to quaternary structure, homotrimer. The cofactor is Mg(2+).

It carries out the reaction (2R)-O-phospho-3-sulfolactate = phosphoenolpyruvate + sulfite + H(+). It functions in the pathway cofactor biosynthesis; coenzyme M biosynthesis; sulfoacetaldehyde from phosphoenolpyruvate and sulfite: step 1/4. Catalyzes the addition of sulfite to phosphoenolpyruvate (PEP) to yield (2R)-phospho-3-sulfolactate (PSL). The polypeptide is Phosphosulfolactate synthase (comA) (Methanocaldococcus jannaschii (strain ATCC 43067 / DSM 2661 / JAL-1 / JCM 10045 / NBRC 100440) (Methanococcus jannaschii)).